A 505-amino-acid polypeptide reads, in one-letter code: MSRITTSLDHYEVWFLTGSQNLYGEETLQQVAEQSQEIARQLEEASDIPVRVVWKPVLKDSDSIRRMALEANASDRTIGLIAWMHTFSPAKMWIQGLDALQKPFLHLHTQANVALPWSSIDMDFMNLNQAAHGDREFGYIQSRLGVVRKTVVGHVSTESVRDSIGTWMRAAAGWAAVHELKVARFGDNMRNVAVTEGDKTEAELKFGVSVNTWGVNDLVERVDAATDAEIDALVDEYERLYDIAPELQRGGERHESLRYGAAIEVGLRSFLEEGGFGAFTTSFEDLGGLRQLPGLAVQRLMAEGYGFGAEGDWKTAVLIRAAKVMGSGLPGGASLMEDYTYHLVPGEEKILGAHMLEICPTLTTGRPSLEIHPLGIGGREDPVRLVFDTDPGPAVVVAMSDMRERFRIVANVVEVVPLDEPLPNLPVARAVWKPAPDLATSAAAWLTAGAAHHTVMSTQVGVEVFEDFAEIARTELLVIDEDTTLKGFTKEVRWNQAYHRLAQGL.

Positions 310, 337, 354, and 453 each coordinate Mn(2+).

This sequence belongs to the arabinose isomerase family. Mn(2+) is required as a cofactor.

It catalyses the reaction beta-L-arabinopyranose = L-ribulose. It functions in the pathway carbohydrate degradation; L-arabinose degradation via L-ribulose; D-xylulose 5-phosphate from L-arabinose (bacterial route): step 1/3. Its function is as follows. Catalyzes the conversion of L-arabinose to L-ribulose. This Clavibacter sepedonicus (Clavibacter michiganensis subsp. sepedonicus) protein is L-arabinose isomerase.